The sequence spans 202 residues: Nucleoside triphosphate pyrophosphatase (202 aa).

Residue Asp79 is the Proton acceptor of the active site.

It belongs to the Maf family. It depends on a divalent metal cation as a cofactor.

The protein resides in the cytoplasm. It carries out the reaction a ribonucleoside 5'-triphosphate + H2O = a ribonucleoside 5'-phosphate + diphosphate + H(+). The catalysed reaction is a 2'-deoxyribonucleoside 5'-triphosphate + H2O = a 2'-deoxyribonucleoside 5'-phosphate + diphosphate + H(+). Nucleoside triphosphate pyrophosphatase. May have a dual role in cell division arrest and in preventing the incorporation of modified nucleotides into cellular nucleic acids. This is Nucleoside triphosphate pyrophosphatase from Rhodospirillum rubrum (strain ATCC 11170 / ATH 1.1.1 / DSM 467 / LMG 4362 / NCIMB 8255 / S1).